Here is a 167-residue protein sequence, read N- to C-terminus: UPF0179 protein Pars_2336 (167 aa).

It belongs to the UPF0179 family.

The sequence is that of UPF0179 protein Pars_2336 from Pyrobaculum arsenaticum (strain DSM 13514 / JCM 11321 / PZ6).